We begin with the raw amino-acid sequence, 307 residues long: Urease accessory protein UreD (307 aa).

Belongs to the UreD family. As to quaternary structure, ureD, UreF and UreG form a complex that acts as a GTP-hydrolysis-dependent molecular chaperone, activating the urease apoprotein by helping to assemble the nickel containing metallocenter of UreC. The UreE protein probably delivers the nickel.

Its subcellular location is the cytoplasm. In terms of biological role, required for maturation of urease via the functional incorporation of the urease nickel metallocenter. This chain is Urease accessory protein UreD, found in Prochlorococcus marinus (strain NATL2A).